Reading from the N-terminus, the 65-residue chain is Large ribosomal subunit protein bL28 (65 aa).

The tract at residues 1–26 is disordered; that stretch reads MARRDALTGKSALSGQSRSHALNATK. Over residues 11 to 22 the composition is skewed to polar residues; it reads SALSGQSRSHAL.

The protein belongs to the bacterial ribosomal protein bL28 family.

The polypeptide is Large ribosomal subunit protein bL28 (Mycoplasma mycoides subsp. mycoides SC (strain CCUG 32753 / NCTC 10114 / PG1)).